A 374-amino-acid chain; its full sequence is Guanine nucleotide-binding protein subunit alpha-15 (374 aa).

In terms of domain architecture, G-alpha spans 41-374; that stretch reads GELKLLLLGP…ARYLDEINLL (334 aa). The interval 44 to 57 is G1 motif; the sequence is KLLLLGPGESGKST. Residues 49-56, 183-189, 208-212, 277-280, and A346 contribute to the GTP site; these read GPGESGKS, LRSRMPT, DVGGQ, and NKTD. Residue S56 participates in Mg(2+) binding. Residues 181 to 189 are G2 motif; it reads DVLRSRMPT. R186 bears the ADP-ribosylarginine; by cholera toxin mark. T189 contributes to the Mg(2+) binding site. Positions 204–213 are G3 motif; it reads LRIVDVGGQK. Residues 273–280 form a G4 motif region; it reads ILFLNKTD. The interval 344–349 is G5 motif; the sequence is TCATDT.

This sequence belongs to the G-alpha family. G(q) subfamily. G proteins are composed of 3 units; alpha, beta and gamma. The alpha chain contains the guanine nucleotide binding site. In terms of tissue distribution, specifically expressed in hematopoietic cells. Expressed in epididymis (at protein level).

In terms of biological role, guanine nucleotide-binding proteins (G proteins) are involved as modulators or transducers in various transmembrane signaling systems. This Homo sapiens (Human) protein is Guanine nucleotide-binding protein subunit alpha-15 (GNA15).